A 508-amino-acid polypeptide reads, in one-letter code: MGLPWYRVHTVVLNDPGRLIAVHIMHTALVSGWAGSMALYELAVFDPSDPVLDPMWRQGMFVIPFITRLGVTKSWGGWSITGETVTNAGLWSYEGVAAVHIILSGLLFLAAIWHWVFWDLELFRDERTGKPSLDLPKIFGIHLFLSGLLCFGFGAFHVTGLFGPGIWVSDPYGLTGSVQPVSPAWGAEGFDPFNAGGIASHHIAAGILGILAGLFHLSVRPPQRLYKGLRMGNVETVLSSSIAAVFWAAFVVAGTMWYGSAATPIELFGPTRYQWDQGYFEQEIDKRVGTSLSEGLTLSEAWSKIPEKLAFYDYIGNNPAKGGLFRAGAMDNGDGIAVGWLGHASFKDKEGRELFVRRMPSFFETFPVVLLDSEGIVRADVPFRRAESKYSIEQVGVTVQFYGGELDGVSFSDPATVKKYARRAQLGEIFEFDRATLKSDGVFRSSPRGWFTFGHANFALLFFFGHIWHGGRTLFRDVFAGIDPDLDAQVEFGLFQKLGDPSTRREAV.

Helical transmembrane passes span 21–36 (AVHIMHTALVSGWAGS), 101–115 (IILSGLLFLAAIWHW), 140–156 (GIHLFLSGLLCFGFGAF), 203–218 (IAAGILGILAGLFHLS), 237–252 (VLSSSIAAVFWAAFVV), and 457–472 (NFALLFFFGHIWHGGR).

Belongs to the PsbB/PsbC family. PsbB subfamily. PSII is composed of 1 copy each of membrane proteins PsbA, PsbB, PsbC, PsbD, PsbE, PsbF, PsbH, PsbI, PsbJ, PsbK, PsbL, PsbM, PsbT, PsbX, PsbY, PsbZ, Psb30/Ycf12, at least 3 peripheral proteins of the oxygen-evolving complex and a large number of cofactors. It forms dimeric complexes. Binds multiple chlorophylls. PSII binds additional chlorophylls, carotenoids and specific lipids. serves as cofactor.

It is found in the plastid. Its subcellular location is the chloroplast thylakoid membrane. Its function is as follows. One of the components of the core complex of photosystem II (PSII). It binds chlorophyll and helps catalyze the primary light-induced photochemical processes of PSII. PSII is a light-driven water:plastoquinone oxidoreductase, using light energy to abstract electrons from H(2)O, generating O(2) and a proton gradient subsequently used for ATP formation. In Chaetosphaeridium globosum (Charophycean green alga), this protein is Photosystem II CP47 reaction center protein.